Here is a 149-residue protein sequence, read N- to C-terminus: Proline-rich acidic protein 1 (149 aa).

Positions 1–20 (MKRFLLATCLVAALLWEAGA) are cleaved as a signal peptide. Disordered stretches follow at residues 51 to 79 (EPLEKDNQLGPLLPEPKQKPAAAEEKRPD) and 97 to 122 (LQGPELDLDSIDHPMSDDVQDEEVPQ). A compositionally biased stretch (basic and acidic residues) spans 66-79 (PKQKPAAAEEKRPD).

Interacts with MTTP. Interacts with MAD1L1. Predominantly expressed in the intestinal epithelial cells than in the liver (at protein level). Abundantly expressed in the uterus during late pregnancy by uterus epithelial cells. After birth expression rapidly decreases and is no longer found in the uterus by the third day. Also highly expressed in the small intestine where it shows a proximal-distal graded expression.

It is found in the secreted. It localises to the endoplasmic reticulum. Its function is as follows. Lipid-binding protein which promotes lipid absorption by facilitating MTTP-mediated lipid transfer (mainly triglycerides and phospholipids) and MTTP-mediated apoB lipoprotein assembly and secretion. Protects the gastrointestinal epithelium from irradiation-induced apoptosis. May play an important role in maintaining normal growth homeostasis in epithelial cells. Involved in p53/TP53-dependent cell survival after DNA damage. This is Proline-rich acidic protein 1 (Prap1) from Mus musculus (Mouse).